A 561-amino-acid chain; its full sequence is Putative transport protein AHA_2450 (561 aa).

The next 5 helical transmembrane spans lie at 8–28 (LLHQ…LLLG), 37–57 (IGNT…GFEF), 66–86 (FMLF…SVFL), 90–110 (IHYI…TVGL), and 161–181 (NMGI…MLVV). RCK C-terminal domains follow at residues 206 to 291 (SDNE…NYRN) and 293 to 376 (KEVF…KIGF). 5 helical membrane passes run 386–406 (LVAF…SLVF), 409–429 (LEFG…MGYL), 450–470 (LGLA…ILDH), 476–496 (AVVL…GYLF), and 541–561 (TYAV…GFWF).

This sequence belongs to the AAE transporter (TC 2.A.81) family. YbjL subfamily.

Its subcellular location is the cell membrane. The protein is Putative transport protein AHA_2450 of Aeromonas hydrophila subsp. hydrophila (strain ATCC 7966 / DSM 30187 / BCRC 13018 / CCUG 14551 / JCM 1027 / KCTC 2358 / NCIMB 9240 / NCTC 8049).